Consider the following 708-residue polypeptide: Large T antigen (708 aa).

Methionine 1 is modified (N-acetylmethionine; by host). The 64-residue stretch at 12–75 folds into the J domain; the sequence is QLMDLLGLER…VKYAHQPDFG (64 aa). The interval 63–89 is binding of LT to the CUL7 complex; sequence EDGVKYAHQPDFGGFWDATEIPTYGTD. Positions 103 to 107 match the LXCXE motif motif; that stretch reads LFCSE. Serine 106, serine 112, serine 120, and serine 123 each carry phosphoserine; by host. The disordered stretch occupies residues 109 to 134; that stretch reads MPSSDDEATADSQHSTPPKKKRKVED. Threonine 124 is subject to Phosphothreonine; by host. The Nuclear localization signal motif lies at 125 to 132; that stretch reads PPKKKRKV. Positions 139–254 form a DNA-binding region, T-ag OBD; it reads PSELLSFLSH…EESLPGGLKE (116 aa). The T-ag D1-type zinc finger occupies 265–357; the sequence is TKQVSWKLVT…KRVDSLQLTR (93 aa). The Zn(2+) site is built by cysteine 302, cysteine 305, histidine 313, and histidine 317. The tract at residues 337-672 is binding to host TP53 protein; the sequence is CQQAVDTVLA…IDSQSQGSFQ (336 aa). The SF3 helicase domain maps to 400-560; that stretch reads KMDSVVYDFL…DYLKHCLERS (161 aa). An ATPase activity region spans residues 418–616; sequence KKRYWLFKGP…FSLSVYQKMK (199 aa). 426–433 is an ATP binding site; sequence GPIDSGKT. The tract at residues 627-708 is C-terminal region; the sequence is DWLRNSDDDD…PPTPPPEPET (82 aa). Residues 630 to 685 are disordered; that stretch reads RNSDDDDEDSQENADKNEDGGEKNMEDSGHETGIDSQSQGSFQAPQSSQSVHDHNQ. Residue serine 639 is modified to Phosphoserine; by host. Residues 642–662 are compositionally biased toward basic and acidic residues; the sequence is NADKNEDGGEKNMEDSGHETG. Residues 663–679 show a composition bias toward polar residues; sequence IDSQSQGSFQAPQSSQS. Phosphoserine; by host occurs at positions 676, 677, and 679. An N6-acetyllysine; by host modification is found at lysine 697. Residues 699-708 form a CPD region; it reads PPTPPPEPET. Threonine 701 carries the phosphothreonine; by host modification.

Isoform large T antigen forms homohexamers in the presence of ATP. Interacts with host HDAC1. Interacts (via LXCXE domain) with host RB1; the interaction induces the aberrant dissociation of RB1-E2F1 complex thereby disrupting RB1's activity. Interacts (via LXCXE domain) with host pRB-related proteins RBL1 and RBL2. Interacts (via C-terminus) with host TOP1 and POLA1 allowing DNA replication. Interacts with host TP53, inhibiting TP53 binding to DNA. Interacts with host preinitiation complex components TBP, TFIIA and TFIID to regulate transcription initiation. LT interacts (via CPD region) with host FBW7gamma isoform (via WD repeats); seems to function as a competitive inhibitor of FBW7gamma function for physiologic substrates. LT interacts with host E3 ubiquitin ligase CUL7; this interaction seems to inhibit CUL7. Component of a SCF(CUL7)-like complex composed of SV40 Lt and host proteins CUL7, SKP1, RBX1, and FBXW8. LT interacts with host BUB1; this interaction induces activation of a DNA damage response and promotes p53 stabilization and phosphorylation. Interacts with host FAM111A and this interaction is required for efficient viral replication and sustained viral gene expression in restrictive cell types. Requires Mg(2+) as cofactor. Phosphorylated on both serine and threonine residues. Phosphorylation on Ser-120 and Ser-123 inhibits viral replication, while phosphorylation on Thr-124 enhances replication by activating the DNA-binding domain. Phosphorylation on Thr-701 is required for binding to host FBW7gamma isoform. Dephosphorylated preferentially by PP2A on Ser-120, Ser-123, Ser-677 and perhaps Ser-679. Small t antigen inhibits the dephosphorylation by the AC form of PP2A. In terms of processing, O-Glycosylated near the C-terminal region. Post-translationally, acetylated by CBP in a TP53-dependent manner.

It is found in the host nucleus. It catalyses the reaction Couples ATP hydrolysis with the unwinding of duplex DNA by translocating in the 3'-5' direction.. The catalysed reaction is ATP + H2O = ADP + phosphate + H(+). Its activity is regulated as follows. DNA helicase activity is inhibited by ATP-gamma-S. Its function is as follows. Isoform large T antigen is a key early protein essential for both driving viral replication and inducing cellular transformation. Plays a role in viral genome replication by driving entry of quiescent cells into the cell cycle and by autoregulating the synthesis of viral early mRNA. Displays highly oncogenic activities by corrupting the host cellular checkpoint mechanisms that guard cell division and the transcription, replication, and repair of DNA. Participates in the modulation of cellular gene expression preceeding viral DNA replication. This step involves binding to host key cell cycle regulators retinoblastoma protein RB1/pRb and TP53. Induces the disassembly of host E2F1 transcription factors from RB1, thus promoting transcriptional activation of E2F1-regulated S-phase genes. Inhibits host TP53 binding to DNA, abrogating the ability of TP53 to stimulate gene expression. Plays the role of a TFIID-associated factor (TAF) in transcription initiation for all three RNA polymerases, by stabilizing the TBP-TFIIA complex on promoters. Initiates viral DNA replication and unwinding via interactions with the viral origin of replication. Binds two adjacent sites in the SV40 origin. The replication fork movement is facilitated by Large T antigen helicase activity. Has processive 3'-5' DNA helicase activity which requires a short 3' single-stranded region and ATP; other (d)NTPs can partially replace ATP. Activates the transcription of viral late mRNA, through host TBP and TFIIA stabilization. Interferes with histone deacetylation mediated by HDAC1, leading to activation of transcription. May inactivate the growth-suppressing properties of the E3 ubiquitin ligase CUL7. Isoform 17kT antigen targets host RBL2 for degradation and promotes cell proliferation. Transactivates host cyclin A promoter through its J domain. Functionally, unwinds G4 DNA (planar arrays of 4 guanine bases stabilized by hydrogen bonds, parallel and antiparallel arrays were tested); unwinding occurs in the 3'-5' direction, requires a 3' single-stranded end and hydrolyzable ATP. This Macaca (macaques) protein is Large T antigen.